The following is a 338-amino-acid chain: MAGSHPYLNPPDSTHPSPPSAPPSLRWHQCCQPSDATNGLLVALLGGGLPAGFVGPLSHMAYQASNLPSLELLICRCLFHLPIALLLKLRGDPLLGPPDIRGRAYFYALLNVLSIGCAYSAVQVVPAGNAATVRKGSSTVCSAVLTLCLESQGLSGYDWCGLLGSILGLIIIVGPGLWTLQEGITGVYTALGYGQAFVGGLALSLGLLVYRSLHFPSCLPTVAFLSGLVGLLGSVPGLFVLQPPVLPSDLPSWSCVGAVGILALVSFTCVSYAVTKAHPALVCAVLHSEVVVALILQYYMLHETVAPSDIVGAGVVLGSIAIITAWNLSCEREGKVEE.

The disordered stretch occupies residues Met-1 to Leu-25. 9 helical membrane passes run Leu-40–Met-60, Leu-67–Leu-87, Tyr-105–Val-125, Cys-160–Leu-180, Ala-190–Tyr-210, Thr-221–Leu-241, Cys-255–Thr-275, Leu-281–Leu-301, and Ile-310–Cys-330. The EamA 1 domain maps to Leu-49–Gly-174. The EamA 2 domain occupies Tyr-272 to Ala-325.

It belongs to the SLC35G solute transporter family. As to expression, expressed in placenta and testis.

It is found in the membrane. In Homo sapiens (Human), this protein is Solute carrier family 35 member G6 (SLC35G6).